Here is a 70-residue protein sequence, read N- to C-terminus: Putative antitoxin VapB34 (70 aa).

Functionally, antitoxin component of a possible type II toxin-antitoxin (TA) system. The cognate toxin is VapC34. This chain is Putative antitoxin VapB34 (vapB34), found in Mycobacterium tuberculosis (strain CDC 1551 / Oshkosh).